We begin with the raw amino-acid sequence, 762 residues long: Endonuclease MutS2 (762 aa).

A disordered region spans residues 1–22 (MSDAPKRSLNPTLMMNNNNTPP). Over residues 9-20 (LNPTLMMNNNNT) the composition is skewed to low complexity. 333–340 (GVNAGGKT) serves as a coordination point for ATP. One can recognise a Smr domain in the interval 688–762 (LDLRGQRSEE…GGSGVKIVKL (75 aa)).

The protein belongs to the DNA mismatch repair MutS family. MutS2 subfamily. In terms of assembly, homodimer. Binds to stalled ribosomes, contacting rRNA.

With respect to regulation, ATPase activity is stimulated by DNA. In terms of biological role, endonuclease that is involved in the suppression of homologous recombination and may thus have a key role in the control of bacterial genetic diversity. Also involved in repairing oxidative DNA damage. Has ATPase activity. Binds DNA. Its function is as follows. Endonuclease that is involved in the suppression of homologous recombination and thus may have a key role in the control of bacterial genetic diversity. Acts as a ribosome collision sensor, splitting the ribosome into its 2 subunits. Detects stalled/collided 70S ribosomes which it binds and splits by an ATP-hydrolysis driven conformational change. Acts upstream of the ribosome quality control system (RQC), a ribosome-associated complex that mediates the extraction of incompletely synthesized nascent chains from stalled ribosomes and their subsequent degradation. Probably generates substrates for RQC. This is Endonuclease MutS2 from Helicobacter pylori (strain ATCC 700392 / 26695) (Campylobacter pylori).